The sequence spans 204 residues: MMRTLITTHPLLLLLLLQQLLQPVQLQEVDTDFDSPDDEMEELEEYLEEFQSRGPTRPPTKENVERRVIIEPGMPLYDRDYCNEEIKRKNVYHKYRCVTEHYFLLMQYDELQKICYNRFVPCKNGVRKCNRSKGLVEGVYCNLTEALEIPGCEYKSFYRTGYVLITCAWQNEIHKLIPHTINDLVEPPKHRSFLNEDGVFVIPP.

Positions M1–L26 are cleaved as a signal peptide. Intrachain disulfides connect C97/C152, C115/C167, and C122/C129. N-linked (GlcNAc...) asparagine glycans are attached at residues N130 and N142.

Belongs to the pancreatic ribonuclease family.

It is found in the secreted. In terms of biological role, does not exhibit any ribonuclease activity. In Chlorocebus pygerythrus (Vervet monkey), this protein is Inactive ribonuclease-like protein 9 (RNASE9).